Consider the following 269-residue polypeptide: Chymotrypsin-like elastase family member 3B (269 aa).

The N-terminal stretch at 1-16 (MLRLLSSLLLVALASG) is a signal peptide. Positions 17–27 (CGQPSHNPSSR) are cleaved as a propeptide — activation peptide. The 240-residue stretch at 28–267 (VVNGEEAVPH…FIDWIEETIA (240 aa)) folds into the Peptidase S1 domain. A disulfide bridge connects residues Cys57 and Cys73. Active-site charge relay system residues include His72 and Asp122. Cystine bridges form between Cys156/Cys222, Cys187/Cys203, and Cys212/Cys243. Catalysis depends on Ser216, which acts as the Charge relay system.

It belongs to the peptidase S1 family. Elastase subfamily.

It carries out the reaction Preferential cleavage: Ala-|-Xaa. Does not hydrolyze elastin.. In terms of biological role, efficient protease with alanine specificity but only little elastolytic activity. This chain is Chymotrypsin-like elastase family member 3B (Cela3b), found in Mus musculus (Mouse).